Reading from the N-terminus, the 362-residue chain is P2Y purinoceptor 1 (362 aa).

Residues 1-40 (MTEALISAALNGTQPELLAGGWAAGNASTKCSLTKTGFQF) lie on the Extracellular side of the membrane. N-linked (GlcNAc...) asparagine glycans are attached at residues Asn11 and Asn26. Intrachain disulfides connect Cys31-Cys285 and Cys113-Cys191. An ADP-binding site is contributed by Lys35. A helical transmembrane segment spans residues 41-63 (YYLPTVYILVFITGFLGNSVAIW). Residues 64-76 (MFVFHMRPWSGIS) lie on the Cytoplasmic side of the membrane. The chain crosses the membrane as a helical span at residues 77-98 (VYMFNLALADFLYVLTLPALIF). Residues 99 to 114 (YYFNKTDWIFGDVMCK) lie on the Extracellular side of the membrane. N-linked (GlcNAc...) asparagine glycosylation is present at Asn102. A helical transmembrane segment spans residues 115-136 (LQRFIFHVNLYGSILFLTCISV). At 137–155 (HRYTGVVHPLKSLGRLKKK) the chain is on the cytoplasmic side. The chain crosses the membrane as a helical span at residues 156–177 (NAVYVSSLVWALVVAVIAPILF). The Extracellular segment spans residues 178–203 (YSGTGVRRNKTITCYDTTADEYLRSY). Asn186 is a glycosylation site (N-linked (GlcNAc...) asparagine). ADP is bound at residue 192–194 (YDT). A helical transmembrane segment spans residues 204–226 (FVYSMCTTVFMFCIPFIVILGCY). Residues 227–249 (GLIVKALIYKDLDNSPLRRKSIY) are Cytoplasmic-facing. A helical membrane pass occupies residues 250–273 (LVIIVLTVFAVSYLPFHVMKTLNL). ADP is bound by residues 272-276 (NLRAR), 292-295 (YATY), and Arg299. The Extracellular segment spans residues 274 to 292 (RARLDFQTPQMCAFNDKVY). A helical transmembrane segment spans residues 293–314 (ATYQVTRGLASLNSCVDPILYF). At 315 to 362 (LAGDTFRRRLSRATRKSSRRSEPNVQSKSEEMTLNILTEYKQNGDTSL) the chain is on the cytoplasmic side.

It belongs to the G-protein coupled receptor 1 family. In terms of tissue distribution, mainly found in blood, brain, and lung. To a lesser extent in stomach, gut and skeletal muscle.

The protein localises to the cell membrane. In terms of biological role, receptor for extracellular adenine nucleotides such as ADP. In platelets, binding to ADP leads to mobilization of intracellular calcium ions via activation of phospholipase C, a change in platelet shape, and ultimately platelet aggregation. This chain is P2Y purinoceptor 1 (P2RY1), found in Meleagris gallopavo (Wild turkey).